Consider the following 61-residue polypeptide: Small ribosomal subunit protein uS14 (61 aa).

Zn(2+) contacts are provided by Cys-24, Cys-27, Cys-40, and Cys-43.

This sequence belongs to the universal ribosomal protein uS14 family. Zinc-binding uS14 subfamily. In terms of assembly, part of the 30S ribosomal subunit. Contacts proteins S3 and S10. Zn(2+) serves as cofactor.

Functionally, binds 16S rRNA, required for the assembly of 30S particles and may also be responsible for determining the conformation of the 16S rRNA at the A site. The polypeptide is Small ribosomal subunit protein uS14 (Rhodococcus erythropolis (strain PR4 / NBRC 100887)).